A 119-amino-acid polypeptide reads, in one-letter code: MKIALIAHDKKKEEMIELAKDFEDKLSKHILVATGTTGLKIMQNTSLEVKRCKSGPLGGDQEIGAMVANHDVDMVIFLRDPLTAQPHEPDISALLRLCDVYKVPLATNTESAKLIMADI.

An MGS-like domain is found at 1–119 (MKIALIAHDK…ESAKLIMADI (119 aa)). Substrate-binding positions include H8, K12, 34-37 (TGTT), and 54-55 (SG). The Proton donor/acceptor role is filled by D60. H87 is a binding site for substrate.

It belongs to the methylglyoxal synthase family.

It carries out the reaction dihydroxyacetone phosphate = methylglyoxal + phosphate. Catalyzes the formation of methylglyoxal from dihydroxyacetone phosphate. The chain is Methylglyoxal synthase from Clostridium perfringens (strain 13 / Type A).